Reading from the N-terminus, the 204-residue chain is Proteasome subunit beta (204 aa).

Positions 1–8 (MDDKILEG) are cleaved as a propeptide — removed in mature form; by autocatalysis. The Nucleophile role is filled by Thr-9.

It belongs to the peptidase T1B family. In terms of assembly, the 20S proteasome core is composed of 14 alpha and 14 beta subunits that assemble into four stacked heptameric rings, resulting in a barrel-shaped structure. The two inner rings, each composed of seven catalytic beta subunits, are sandwiched by two outer rings, each composed of seven alpha subunits. The catalytic chamber with the active sites is on the inside of the barrel. Has a gated structure, the ends of the cylinder being occluded by the N-termini of the alpha-subunits. Is capped at one or both ends by the proteasome regulatory ATPase, PAN.

Its subcellular location is the cytoplasm. The enzyme catalyses Cleavage of peptide bonds with very broad specificity.. Its activity is regulated as follows. The formation of the proteasomal ATPase PAN-20S proteasome complex, via the docking of the C-termini of PAN into the intersubunit pockets in the alpha-rings, triggers opening of the gate for substrate entry. Interconversion between the open-gate and close-gate conformations leads to a dynamic regulation of the 20S proteasome proteolysis activity. Its function is as follows. Component of the proteasome core, a large protease complex with broad specificity involved in protein degradation. This is Proteasome subunit beta from Methanobrevibacter smithii (strain ATCC 35061 / DSM 861 / OCM 144 / PS).